The chain runs to 70 residues: Large ribosomal subunit protein bL31c (70 aa).

It belongs to the bacterial ribosomal protein bL31 family. Type A subfamily. As to quaternary structure, part of the 50S ribosomal subunit.

It is found in the plastid. It localises to the chloroplast. Binds the 23S rRNA. The polypeptide is Large ribosomal subunit protein bL31c (Emiliania huxleyi (Coccolithophore)).